A 613-amino-acid chain; its full sequence is Isocitrate dehydrogenase kinase/phosphatase (613 aa).

Residues 328–334 and lysine 349 contribute to the ATP site; that span reads APGIRGL. Residue aspartate 384 is part of the active site.

Belongs to the AceK family.

The protein resides in the cytoplasm. The catalysed reaction is L-seryl-[isocitrate dehydrogenase] + ATP = O-phospho-L-seryl-[isocitrate dehydrogenase] + ADP + H(+). In terms of biological role, bifunctional enzyme which can phosphorylate or dephosphorylate isocitrate dehydrogenase (IDH) on a specific serine residue. This is a regulatory mechanism which enables bacteria to bypass the Krebs cycle via the glyoxylate shunt in response to the source of carbon. When bacteria are grown on glucose, IDH is fully active and unphosphorylated, but when grown on acetate or ethanol, the activity of IDH declines drastically concomitant with its phosphorylation. The sequence is that of Isocitrate dehydrogenase kinase/phosphatase from Cupriavidus necator (strain ATCC 17699 / DSM 428 / KCTC 22496 / NCIMB 10442 / H16 / Stanier 337) (Ralstonia eutropha).